The following is a 110-amino-acid chain: Quaternary ammonium compound-resistance protein QacF (110 aa).

4 consecutive transmembrane segments (helical) span residues 1–21 (MKNWIFLAVSIFGEVIATSAL), 31–51 (VPSVVVVAGYGLAFYFLSLAL), 58–78 (IAYAVWAGLGIVLVAAIAWIF), and 85–105 (FWAFIGMGLIVSGVAVLNLLS).

The protein belongs to the drug/metabolite transporter (DMT) superfamily. Small multidrug resistance (SMR) (TC 2.A.7.1) family.

The protein localises to the cell membrane. Functionally, multidrug exporter. Is implicated for the resistance to bacteriocidal quaternary ammonium compounds. In Klebsiella aerogenes (Enterobacter aerogenes), this protein is Quaternary ammonium compound-resistance protein QacF (qacF).